The sequence spans 267 residues: Small ribosomal subunit protein uS10m (267 aa).

The transit peptide at 1 to 10 (MLSRILGVRN) directs the protein to the mitochondrion.

This sequence belongs to the universal ribosomal protein uS10 family. In terms of assembly, part of the mitochondrial small ribosomal subunit.

Its subcellular location is the mitochondrion. Involved in mitochondrial genome encoded proteins translation. Involved in the binding of tRNA to the ribosomes. The chain is Small ribosomal subunit protein uS10m (RSM10) from Debaryomyces hansenii (strain ATCC 36239 / CBS 767 / BCRC 21394 / JCM 1990 / NBRC 0083 / IGC 2968) (Yeast).